A 277-amino-acid polypeptide reads, in one-letter code: Bifunctional protein FolD (277 aa).

Residues 164–166 (GRS), serine 189, and threonine 230 each bind NADP(+).

The protein belongs to the tetrahydrofolate dehydrogenase/cyclohydrolase family. As to quaternary structure, homodimer.

It carries out the reaction (6R)-5,10-methylene-5,6,7,8-tetrahydrofolate + NADP(+) = (6R)-5,10-methenyltetrahydrofolate + NADPH. It catalyses the reaction (6R)-5,10-methenyltetrahydrofolate + H2O = (6R)-10-formyltetrahydrofolate + H(+). The protein operates within one-carbon metabolism; tetrahydrofolate interconversion. Its function is as follows. Catalyzes the oxidation of 5,10-methylenetetrahydrofolate to 5,10-methenyltetrahydrofolate and then the hydrolysis of 5,10-methenyltetrahydrofolate to 10-formyltetrahydrofolate. This chain is Bifunctional protein FolD, found in Clostridium perfringens (strain ATCC 13124 / DSM 756 / JCM 1290 / NCIMB 6125 / NCTC 8237 / Type A).